We begin with the raw amino-acid sequence, 320 residues long: MRLLALAAAALLARAPAPEVCAALNVTVSPGPVVDYLEGENATLLCHVSQKRRKDSLLAVRWFFAHSFDSQEALMVKMTKLRVVQYYGNFSRSAKRRRLRLLEEQRGALYRLSVLTLQPSDQGHYVCRVQEISRHRNKWTAWSNGSSATEMRVISLKASEESSFEKTKETWAFFEDLYVYAVLVCCVGILSILLFMLVIVWQSVFNKRKSRVRHYLVKCPQNSSGETVTSVTSLAPLQPKKGKRQKEKPDIPPAVPAKAPIAPTFHKPKLLKPQRKVTLPKIAEENLTYAELELIKPHRAAKGAPTSTVYAQILFEENKL.

A signal peptide spans 1-23 (MRLLALAAAALLARAPAPEVCAA). The region spanning 24–155 (LNVTVSPGPV…SSATEMRVIS (132 aa)) is the Ig-like domain. The Extracellular portion of the chain corresponds to 24 to 180 (LNVTVSPGPV…WAFFEDLYVY (157 aa)). N-linked (GlcNAc...) asparagine glycosylation is found at N25, N41, N89, and N144. The cysteines at positions 46 and 127 are disulfide-linked. The chain crosses the membrane as a helical span at residues 181–201 (AVLVCCVGILSILLFMLVIVW). Over 202-320 (QSVFNKRKSR…AQILFEENKL (119 aa)) the chain is Cytoplasmic.

In terms of processing, proteolytically cleaved to generate a bioactive peptide.

It is found in the secreted. The protein resides in the cell membrane. Functionally, peptide Lv enhances L-type voltage-gated calcium channel (L-VGCC) currents in retinal photoreceptors. The chain is V-set and transmembrane domain-containing protein 4 (VSTM4) from Homo sapiens (Human).